Here is a 587-residue protein sequence, read N- to C-terminus: F-box/WD repeat-containing protein sel-10 (587 aa).

Positions 1 to 11 (MWPRNDVHMDD) are enriched in basic and acidic residues. The tract at residues 1–53 (MWPRNDVHMDDGSMTPEDQEPVTDNDMEYNDNGEESSYSNGSSSSYNADKLSS) is disordered. The segment covering 17 to 34 (EDQEPVTDNDMEYNDNGE) has biased composition (acidic residues). A compositionally biased stretch (low complexity) spans 35 to 47 (ESSYSNGSSSSYN). The F-box domain occupies 121–167 (RDFLSCLPVELGMKILHNLTGYDLLKVAQVSKNWKLISEIDKIWKSL). WD repeat units follow at residues 253-291 (GHED…VMYT), 294-333 (GHTG…LLHT), 336-373 (GHTS…HLAT), 376-415 (GHHA…RTLT), 416-455 (GHNN…GQEC), 461-498 (GHTS…CVHM), and 501-539 (GHRS…LIRD).

Probable component of the SCF(sel-10) E3 ubiquitin-protein ligase complex which includes skr-1 and F-box domain-containing protein sel-10 as a substrate recognition component. Interacts with fem-1, fem-2, and fem-3. Interacts with the intracellular domain of glp-1 and sel-12. Interacts with lin-12. Interacts with skr-1. Interacts with zyg-1. In terms of tissue distribution, expressed in tail and head neurons.

The protein resides in the cell projection. It localises to the axon. Its subcellular location is the cytoplasm. Functionally, probable substrate recognition component of SCF (SKP1-CUL-F-box protein) E3 ubiquitin-protein ligase complex, which mediates the ubiquitination and subsequent proteasomal degradation of target proteins. Regulates synapse elimination in early development in the motor neuron HSNL. Cell autonomous negative regulator of lin-12/Notch-mediated signaling, with respect to lin-12 activity in cell fate decisions and tumorigenesis. May target the intracellular domains of lin-12/Notch proteins for ubiquitin-dependent degradation. Involved in sex determination by promoting female development. Potential regulator of presenilin. May have a role in egg laying. Regulates zyg-1 levels (possibly redundantly with lin-23) to control centrosome duplication during mitosis. Negatively regulates lin-45 activity and protein stability, probably by targeting it for ubiquitination and proteasomal degradation. The protein is F-box/WD repeat-containing protein sel-10 of Caenorhabditis elegans.